The primary structure comprises 268 residues: 3-methyl-2-oxobutanoate hydroxymethyltransferase (268 aa).

Aspartate 46 and aspartate 85 together coordinate Mg(2+). 3-methyl-2-oxobutanoate-binding positions include 46–47, aspartate 85, and lysine 114; that span reads DS. Mg(2+) is bound at residue glutamate 116. Glutamate 183 serves as the catalytic Proton acceptor.

This sequence belongs to the PanB family. Homodecamer; pentamer of dimers. The cofactor is Mg(2+).

It localises to the cytoplasm. It catalyses the reaction 3-methyl-2-oxobutanoate + (6R)-5,10-methylene-5,6,7,8-tetrahydrofolate + H2O = 2-dehydropantoate + (6S)-5,6,7,8-tetrahydrofolate. Its pathway is cofactor biosynthesis; coenzyme A biosynthesis. Catalyzes the reversible reaction in which hydroxymethyl group from 5,10-methylenetetrahydrofolate is transferred onto alpha-ketoisovalerate to form ketopantoate. The protein is 3-methyl-2-oxobutanoate hydroxymethyltransferase of Sulfolobus acidocaldarius (strain ATCC 33909 / DSM 639 / JCM 8929 / NBRC 15157 / NCIMB 11770).